The primary structure comprises 428 residues: Glutamyl-tRNA reductase (428 aa).

Residues 49–52 (TCNR), Ser-109, 114–116 (EGQ), and Gln-120 each bind substrate. Cys-50 functions as the Nucleophile in the catalytic mechanism. 189-194 (GAGKMS) lines the NADP(+) pocket.

This sequence belongs to the glutamyl-tRNA reductase family. As to quaternary structure, homodimer.

The enzyme catalyses (S)-4-amino-5-oxopentanoate + tRNA(Glu) + NADP(+) = L-glutamyl-tRNA(Glu) + NADPH + H(+). Its pathway is porphyrin-containing compound metabolism; protoporphyrin-IX biosynthesis; 5-aminolevulinate from L-glutamyl-tRNA(Glu): step 1/2. It participates in porphyrin-containing compound metabolism; chlorophyll biosynthesis. Functionally, catalyzes the NADPH-dependent reduction of glutamyl-tRNA(Glu) to glutamate 1-semialdehyde (GSA). This Trichormus variabilis (strain ATCC 29413 / PCC 7937) (Anabaena variabilis) protein is Glutamyl-tRNA reductase.